The following is a 244-amino-acid chain: Uridylate kinase (244 aa).

An ATP-binding site is contributed by 18–21 (KVSG). Glycine 60 lines the UMP pocket. ATP contacts are provided by glycine 61 and arginine 65. UMP-binding positions include aspartate 80 and 141-148 (TGNPFCTT). ATP contacts are provided by threonine 168, glutamine 169, tyrosine 174, and aspartate 177.

It belongs to the UMP kinase family. In terms of assembly, homohexamer.

It localises to the cytoplasm. It catalyses the reaction UMP + ATP = UDP + ADP. It functions in the pathway pyrimidine metabolism; CTP biosynthesis via de novo pathway; UDP from UMP (UMPK route): step 1/1. With respect to regulation, inhibited by UTP. Its function is as follows. Catalyzes the reversible phosphorylation of UMP to UDP. The polypeptide is Uridylate kinase (Rickettsia typhi (strain ATCC VR-144 / Wilmington)).